The primary structure comprises 85 residues: Large ribosomal subunit protein bL31B (85 aa).

Belongs to the bacterial ribosomal protein bL31 family. Type B subfamily. Part of the 50S ribosomal subunit.

The protein is Large ribosomal subunit protein bL31B of Staphylococcus epidermidis (strain ATCC 35984 / DSM 28319 / BCRC 17069 / CCUG 31568 / BM 3577 / RP62A).